Consider the following 295-residue polypeptide: UDP-N-acetylenolpyruvoylglucosamine reductase (295 aa).

One can recognise an FAD-binding PCMH-type domain in the interval 25–189 (RVGGPADLFA…LEALFRLDQR (165 aa)). Arg169 is an active-site residue. Residue Ser218 is the Proton donor of the active site. Residue Glu288 is part of the active site.

The protein belongs to the MurB family. FAD serves as cofactor.

Its subcellular location is the cytoplasm. It carries out the reaction UDP-N-acetyl-alpha-D-muramate + NADP(+) = UDP-N-acetyl-3-O-(1-carboxyvinyl)-alpha-D-glucosamine + NADPH + H(+). It functions in the pathway cell wall biogenesis; peptidoglycan biosynthesis. Cell wall formation. The polypeptide is UDP-N-acetylenolpyruvoylglucosamine reductase (Pelobacter propionicus (strain DSM 2379 / NBRC 103807 / OttBd1)).